The sequence spans 259 residues: V-type proton ATPase subunit D (259 aa).

Positions 214–259 are disordered; the sequence is KLKEQEAAQRALEGPPKEEAGGTHSENQPPRNLLAVEEDNLPVLFN.

The protein belongs to the V-ATPase D subunit family. In terms of assembly, V-ATPase is a heteromultimeric enzyme made up of two complexes: the ATP-hydrolytic V1 complex and the proton translocation V0 complex. The V1 complex consists of three catalytic AB heterodimers that form a heterohexamer, three peripheral stalks each consisting of EG heterodimers, one central rotor including subunits D and F, and the regulatory subunits C and H. The proton translocation complex V0 consists of the proton transport subunit a, a ring of proteolipid subunits c9c'', rotary subunit d, and The proton translocation complex V0 consists of the proton transport subunit a, a ring of proteolipid subunits c9c'', rotary subunit d, subunits e and f, and the accessory subunits vah-19/Ac45 and vah-20/PRR.

Subunit of the V1 complex of vacuolar(H+)-ATPase (V-ATPase), a multisubunit enzyme composed of a peripheral complex (V1) that hydrolyzes ATP and a membrane integral complex (V0) that translocates protons. V-ATPase is responsible for acidifying and maintaining the pH of intracellular compartments and in some cell types, is targeted to the plasma membrane, where it is responsible for acidifying the extracellular environment. In Caenorhabditis briggsae, this protein is V-type proton ATPase subunit D.